A 484-amino-acid chain; its full sequence is 6-phosphogluconate dehydrogenase, decarboxylating (484 aa).

Residues 11 to 16 (GLAVMG), 34 to 36 (NRT), 76 to 78 (VRA), and asparagine 104 contribute to the NADP(+) site. Substrate contacts are provided by residues asparagine 104 and 130–132 (SGG). Residue lysine 185 is the Proton acceptor of the active site. A substrate-binding site is contributed by 188 to 189 (HN). Glutamate 192 acts as the Proton donor in catalysis. Substrate-binding residues include tyrosine 193, lysine 262, arginine 289, arginine 447, and histidine 453.

It belongs to the 6-phosphogluconate dehydrogenase family. As to quaternary structure, homodimer.

It carries out the reaction 6-phospho-D-gluconate + NADP(+) = D-ribulose 5-phosphate + CO2 + NADPH. It functions in the pathway carbohydrate degradation; pentose phosphate pathway; D-ribulose 5-phosphate from D-glucose 6-phosphate (oxidative stage): step 3/3. In terms of biological role, catalyzes the oxidative decarboxylation of 6-phosphogluconate to ribulose 5-phosphate and CO(2), with concomitant reduction of NADP to NADPH. This chain is 6-phosphogluconate dehydrogenase, decarboxylating (gnd), found in Haemophilus ducreyi (strain 35000HP / ATCC 700724).